Here is a 241-residue protein sequence, read N- to C-terminus: Probable transcriptional regulatory protein Daro_4067 (241 aa).

The tract at residues 1 to 22 (MAGHSKWANIQHRKGRQDEKRG) is disordered.

It belongs to the TACO1 family.

Its subcellular location is the cytoplasm. This chain is Probable transcriptional regulatory protein Daro_4067, found in Dechloromonas aromatica (strain RCB).